The following is a 557-amino-acid chain: Organic cation/carnitine transporter 2 (557 aa).

At 1–20 (MRDYDEVTAFLGEWGPFQRL) the chain is on the cytoplasmic side. A helical membrane pass occupies residues 21–41 (IFFLLSASIIPNGFNGMSIVF). At 42–142 (LAGTPEHRCL…DLVCKDDWKA (101 aa)) the chain is on the extracellular side. N-linked (GlcNAc...) asparagine glycosylation is found at N57, N64, and N91. Residues 143-163 (PLTTSLFFVGVLMGSFISGQL) traverse the membrane as a helical segment. Topologically, residues 164–172 (SDRFGRKNV) are cytoplasmic. Residues 173 to 193 (LFLTMGMQTGFSFLQVFSVNF) traverse the membrane as a helical segment. Topologically, residues 194–197 (EMFT) are extracellular. The helical transmembrane segment at 198-218 (VLFVLVGMGQISNYVAAFVLG) threads the bilayer. 218 to 225 (GTEILSKS) provides a ligand contact to ATP. Over 219–232 (TEILSKSIRIIFAT) the chain is Cytoplasmic. The helical transmembrane segment at 233-253 (LGVCIFYAFGFMVLPLFAYFI) threads the bilayer. Residues 254–257 (RDWR) lie on the Extracellular side of the membrane. A helical membrane pass occupies residues 258–278 (MLLLALTVPGVLCGALWWFIP). Over 279-341 (ESPRWLISQG…YDLIRTRNIR (63 aa)) the chain is Cytoplasmic. A helical transmembrane segment spans residues 342 to 362 (VITIMSIILWLTISVGYFGLS). Topologically, residues 363-373 (LDTPNLHGDIY) are extracellular. The helical transmembrane segment at 374-394 (VNCFLLAAVEVPAYVLAWLLL) threads the bilayer. At 395 to 406 (QYLPRRYSISAA) the chain is on the cytoplasmic side. The chain crosses the membrane as a helical span at residues 407 to 427 (LFLGGSVLLFMQLVPSELFYL). The Extracellular segment spans residues 428–430 (STA). Residues 431 to 451 (LVMVGKFGITSAYSMVYVYTA) traverse the membrane as a helical segment. The Cytoplasmic segment spans residues 452-462 (ELYPTVVRNMG). The chain crosses the membrane as a helical span at residues 463–483 (VGVSSTASRLGSILSPYFVYL). The Extracellular segment spans residues 484–488 (GAYDR). The residue at position 486 (Y486) is a Phosphotyrosine. The helical transmembrane segment at 489–509 (FLPYILMGSLTILTAILTLFF) threads the bilayer. The Cytoplasmic portion of the chain corresponds to 510-557 (PESFGVPLPDTIDQMLRVKGIKQWQIQSQTRMQKDGEESPTVLKSTAF). S548 is modified (phosphoserine). T550 is subject to Phosphothreonine.

It belongs to the major facilitator (TC 2.A.1) superfamily. Organic cation transporter (TC 2.A.1.19) family. In terms of assembly, interacts with PDZK1. Widely expressed. Expressed in kidney, liver and testis. Expressed at the brush border of the small, large intestine and colon (at protein level).

It is found in the apical cell membrane. The protein resides in the basal cell membrane. It localises to the cell membrane. It carries out the reaction (R)-carnitine(out) + Na(+)(out) = (R)-carnitine(in) + Na(+)(in). The catalysed reaction is glycine betaine(out) + Na(+)(out) = glycine betaine(in) + Na(+)(in). It catalyses the reaction glycine betaine(out) + (R)-carnitine(in) = glycine betaine(in) + (R)-carnitine(out). The enzyme catalyses O-butanoyl-(R)-carnitine(out) + Na(+)(out) = O-butanoyl-(R)-carnitine(in) + Na(+)(in). It carries out the reaction O-acetyl-(R)-carnitine(out) + Na(+)(out) = O-acetyl-(R)-carnitine(in) + Na(+)(in). The catalysed reaction is O-propanoyl-(R)-carnitine(out) + Na(+)(out) = O-propanoyl-(R)-carnitine(in) + Na(+)(in). It catalyses the reaction (S)-carnitine(out) + Na(+)(out) = (S)-carnitine(in) + Na(+)(in). The enzyme catalyses an O-acyl-(R)-carnitine(out) + Na(+)(out) = an O-acyl-(R)-carnitine(in) + Na(+)(in). It carries out the reaction L-glutamyl-L-arginyl-glycyl-L-methionyl-L-threonine(out) + Na(+)(out) = L-glutamyl-L-arginyl-glycyl-L-methionyl-L-threonine(in) + Na(+)(in). The catalysed reaction is N,N-dimethylglycine(out) + Na(+)(out) = N,N-dimethylglycine(in) + Na(+)(in). Its activity is regulated as follows. Inhibited by emetine, quinidine and verapamil. The IC(50) of emetine is 4.2 uM. Not inhibited by valproic acid. Transport of (R)-carnitine is stimulated by cholesterol in the plasma membrane. Its function is as follows. Sodium-ion dependent, high affinity carnitine transporter. Involved in the active cellular uptake of carnitine. Transports one sodium ion with one molecule of carnitine. Also transports organic cations such as tetraethylammonium (TEA) without the involvement of sodium. Also relative uptake activity ratio of carnitine to TEA is 11.3. May also contribute to regulate the transport of organic compounds in testis across the blood-testis-barrier. The polypeptide is Organic cation/carnitine transporter 2 (Mus musculus (Mouse)).